The chain runs to 275 residues: Sulfate transporter CysZ (275 aa).

Residues 1–24 (MSSEKSSFPEKPPSFEKPSHSNTA) are disordered. Residues 13–24 (PSFEKPSHSNTA) are compositionally biased toward basic and acidic residues. Transmembrane regions (helical) follow at residues 49–69 (FVILPLLMNIVLMGGAFWWLF), 93–113 (LIWPLAVLSILLVFSYLFSTI), 169–189 (IVLLLLYFIPGIGQTVAPVLW), and 232–252 (ALVSLFTLVPFLNLVIMPVAV).

It belongs to the CysZ family.

It localises to the cell inner membrane. Functionally, high affinity, high specificity proton-dependent sulfate transporter, which mediates sulfate uptake. Provides the sulfur source for the cysteine synthesis pathway. The chain is Sulfate transporter CysZ from Pectobacterium atrosepticum (strain SCRI 1043 / ATCC BAA-672) (Erwinia carotovora subsp. atroseptica).